The chain runs to 361 residues: 45 kDa calcium-binding protein (361 aa).

An N-terminal signal peptide occupies residues 1–35 (MVWLVAMTPRQSSLCGLAAHGLWFLGLVLLMDATA). N-linked (GlcNAc...) asparagine glycosylation occurs at asparagine 39. EF-hand domains lie at 97–132 (RSRR…KTAE) and 136–171 (EAVK…SKGH). Position 98 is a phosphoserine (serine 98). Aspartate 110, asparagine 112, aspartate 114, arginine 116, glutamate 121, aspartate 149, aspartate 151, aspartate 153, histidine 155, and glutamate 160 together coordinate Ca(2+). Threonine 192 carries the phosphothreonine modification. EF-hand domains are found at residues 196–231 (LGNL…HSRG), 232–267 (MLKF…TVEN), 277–312 (WVKD…MNEY), and 313–348 (NALN…FTGS). Position 212 (aspartate 212) interacts with Ca(2+). At threonine 216 the chain carries Phosphothreonine. Positions 219, 245, 247, 249, 251, and 256 each coordinate Ca(2+). Residue threonine 264 is modified to Phosphothreonine. 3 residues coordinate Ca(2+): aspartate 290, asparagine 292, and aspartate 294. Threonine 298 is modified (phosphothreonine). 6 residues coordinate Ca(2+): glutamate 301, aspartate 326, asparagine 328, asparagine 330, histidine 332, and glutamate 337. A necessary for intracellular retention in Golgi apparatus lumen region spans residues 308 to 361 (PMNEYNALNEAKQMIAIADENQNHHLEPEEILKYSEFFTGSKLMDYARNVHEEF).

This sequence belongs to the CREC family. In terms of tissue distribution, ubiquitous.

It localises to the golgi apparatus lumen. Its function is as follows. May regulate calcium-dependent activities in the endoplasmic reticulum lumen or post-ER compartment. The sequence is that of 45 kDa calcium-binding protein (Sdf4) from Mus musculus (Mouse).